We begin with the raw amino-acid sequence, 227 residues long: MADS-box transcription factor 25 (227 aa).

In terms of domain architecture, MADS-box spans 1–61 (MGRGKIAIKR…GRLYDFSSSS (61 aa)). Positions 86–176 (AKFWQREVTT…RKKFNIAHQR (91 aa)) constitute a K-box domain. The disordered stretch occupies residues 183–227 (KLNSGESTSSEQVTRSSKDPGESSTPRDSRVCIDLELSQKEVEDE). Positions 186 to 197 (SGESTSSEQVTR) are enriched in polar residues. Basic and acidic residues predominate over residues 198 to 227 (SSKDPGESSTPRDSRVCIDLELSQKEVEDE).

As to expression, expressed in seedling roots.

The protein resides in the nucleus. In terms of biological role, probable transcription factor. This is MADS-box transcription factor 25 (MADS25) from Oryza sativa subsp. japonica (Rice).